We begin with the raw amino-acid sequence, 369 residues long: Peptide chain release factor 2 (369 aa).

Glutamine 251 is modified (N5-methylglutamine).

It belongs to the prokaryotic/mitochondrial release factor family. In terms of processing, methylated by PrmC. Methylation increases the termination efficiency of RF2.

The protein resides in the cytoplasm. Functionally, peptide chain release factor 2 directs the termination of translation in response to the peptide chain termination codons UGA and UAA. This chain is Peptide chain release factor 2 (prfB), found in Chlamydia muridarum (strain MoPn / Nigg).